Here is a 319-residue protein sequence, read N- to C-terminus: MLIPSPDPFASCPGYYLPDFEPFKACTNISNFCNHARDVYNIEMLLRWAIFIIPCCMSFFALFLNIYIFYVLIPNLRKMNGRSKKKYIFILSRAVSASMSILAIFLLPVIIFLTHFNFWVIALFIIFEMLSFLSFIGGMVGTTLTIYIAVVHPMYYQRELSLRKCVLLILLLWVSAITVAISCGIVEAAFIGRNSPFSCDYGNCAGPVLIFGIVCIATAFSICLVIQLYVIISLWKLGIQSTKRGDYSSTSKALTGVKRKLFAGFFVFATMAIFEIASAIILVRSVSEQTQDLDACDKLSASTSRLQFVISCVVLTLLW.

An N-linked (GlcNAc...) asparagine glycan is attached at Asn28. 6 helical membrane passes run 49-69, 107-127, 131-151, 166-186, 206-226, and 261-281; these read AIFI…IYIF, LPVI…FIIF, SFLS…IAVV, VLLI…CGIV, GPVL…CLVI, and LFAG…SAII.

This sequence belongs to the G-protein coupled receptor 1 family. B0244 subfamily.

Its subcellular location is the cell membrane. This is Putative G-protein coupled receptor B0244.7 from Caenorhabditis elegans.